We begin with the raw amino-acid sequence, 447 residues long: Cysteine--tRNA ligase (447 aa).

Zn(2+) is bound at residue C28. The 'HIGH' region signature appears at 30-40 (PTVYNYIHIGN). Positions 211, 236, and 240 each coordinate Zn(2+). The 'KMSKS' region signature appears at 268 to 272 (KMSKS). Residue K271 participates in ATP binding.

Belongs to the class-I aminoacyl-tRNA synthetase family. As to quaternary structure, monomer. Zn(2+) serves as cofactor.

It is found in the cytoplasm. It carries out the reaction tRNA(Cys) + L-cysteine + ATP = L-cysteinyl-tRNA(Cys) + AMP + diphosphate. The polypeptide is Cysteine--tRNA ligase (Streptococcus agalactiae serotype V (strain ATCC BAA-611 / 2603 V/R)).